The sequence spans 85 residues: V-type proton ATPase subunit f (85 aa).

Topologically, residues 1-10 are lumenal; the sequence is MRPVVSTGKA. The chain crosses the membrane as a helical span at residues 11-31; that stretch reads WCCTVLSAFGVVILSVIAHLF. The Cytoplasmic segment spans residues 32 to 54; it reads NTNHESFVGSINDPEDGPAVAHT. The helical transmembrane segment at 55–75 threads the bilayer; that stretch reads VYLAALVYLVFFVFCGFQVYL. At 76 to 85 the chain is on the lumenal side; it reads ARRKPSIELR.

In terms of assembly, V-ATPase is a heteromultimeric enzyme composed of a peripheral catalytic V1 complex (components A to H) attached to an integral membrane V0 proton pore complex (components: a, c, c', c'', d, e, f and VOA1).

It localises to the endoplasmic reticulum membrane. The protein resides in the vacuole membrane. Functionally, accessory component of the V0 complex of vacuolar(H+)-ATPase (V-ATPase), a multisubunit enzyme composed of a peripheral complex (V1) that hydrolyzes ATP and a membrane integral complex (V0) that translocates protons. V-ATPase is responsible for acidifying and maintaining the pH of intracellular compartments. The chain is V-type proton ATPase subunit f from Saccharomyces cerevisiae (strain ATCC 204508 / S288c) (Baker's yeast).